We begin with the raw amino-acid sequence, 37 residues long: Large ribosomal subunit protein bL36c (37 aa).

Belongs to the bacterial ribosomal protein bL36 family.

The protein resides in the plastid. Its subcellular location is the chloroplast. The protein is Large ribosomal subunit protein bL36c of Dioscorea elephantipes (Elephant's foot yam).